A 774-amino-acid polypeptide reads, in one-letter code: RNA exonuclease 5 (774 aa).

Residues 1 to 19 are compositionally biased toward basic and acidic residues; it reads MEPEREGTERHPRKVRESR. The tract at residues 1 to 22 is disordered; it reads MEPEREGTERHPRKVRESRQAP. Positions 228–376 constitute an Exonuclease domain; that stretch reads LFGLDCEMCL…EDARTILELA (149 aa). RRM domains follow at residues 505–579 and 600–679; these read STVY…RPVT and GSIY…RHLH.

The protein is RNA exonuclease 5 of Homo sapiens (Human).